Consider the following 403-residue polypeptide: CCA-adding enzyme (403 aa).

Residues Gly-32 and Arg-35 each contribute to the ATP site. Residues Gly-32 and Arg-35 each coordinate CTP. Mg(2+)-binding residues include Asp-45 and Asp-47. 5 residues coordinate ATP: Arg-116, Asp-159, Arg-162, Arg-165, and Arg-168. CTP is bound by residues Arg-116, Asp-159, Arg-162, Arg-165, and Arg-168.

This sequence belongs to the tRNA nucleotidyltransferase/poly(A) polymerase family. Bacterial CCA-adding enzyme type 3 subfamily. As to quaternary structure, homodimer. It depends on Mg(2+) as a cofactor.

It catalyses the reaction a tRNA precursor + 2 CTP + ATP = a tRNA with a 3' CCA end + 3 diphosphate. It carries out the reaction a tRNA with a 3' CCA end + 2 CTP + ATP = a tRNA with a 3' CCACCA end + 3 diphosphate. Catalyzes the addition and repair of the essential 3'-terminal CCA sequence in tRNAs without using a nucleic acid template. Adds these three nucleotides in the order of C, C, and A to the tRNA nucleotide-73, using CTP and ATP as substrates and producing inorganic pyrophosphate. tRNA 3'-terminal CCA addition is required both for tRNA processing and repair. Also involved in tRNA surveillance by mediating tandem CCA addition to generate a CCACCA at the 3' terminus of unstable tRNAs. While stable tRNAs receive only 3'-terminal CCA, unstable tRNAs are marked with CCACCA and rapidly degraded. This chain is CCA-adding enzyme, found in Leuconostoc citreum (strain KM20).